Consider the following 438-residue polypeptide: GTPase Obg (438 aa).

The Obg domain occupies 2 to 160; the sequence is NMFVDQIKIE…HYLELELKML (159 aa). Positions 161–337 constitute an OBG-type G domain; the sequence is ADVGLIGFPS…LMQLTADLLD (177 aa). GTP contacts are provided by residues 167-174, 192-196, 214-217, 284-287, and 318-320; these read GFPSVGKS, FTTLT, DMPG, TKMD, and SAV. Residues S174 and T194 each contribute to the Mg(2+) site. Residues 360–438 enclose the OCT domain; it reads PDKKDEADFT…IEKFVFEFIQ (79 aa).

It belongs to the TRAFAC class OBG-HflX-like GTPase superfamily. OBG GTPase family. In terms of assembly, monomer. It depends on Mg(2+) as a cofactor.

It localises to the cytoplasm. In terms of biological role, an essential GTPase which binds GTP, GDP and possibly (p)ppGpp with moderate affinity, with high nucleotide exchange rates and a fairly low GTP hydrolysis rate. Plays a role in control of the cell cycle, stress response, ribosome biogenesis and in those bacteria that undergo differentiation, in morphogenesis control. The protein is GTPase Obg of Limosilactobacillus reuteri (strain DSM 20016) (Lactobacillus reuteri).